A 431-amino-acid polypeptide reads, in one-letter code: Mediator of RNA polymerase II transcription subunit 2 (431 aa).

Ser6 carries the post-translational modification Phosphoserine. Positions 105 to 140 (GKEKEKEREEAEKKRAEQENMRKVREQEELKKRQEL) are enriched in basic and acidic residues. Residues 105-178 (GKEKEKEREE…ANTTDANGSK (74 aa)) form a disordered region. Low complexity predominate over residues 143 to 152 (ASQQQQLQQN). The span at 162–178 (NFSTTAPANTTDANGSK) shows a compositional bias: polar residues. Ser208 carries the post-translational modification Phosphoserine; by CDK8. Positions 284–399 (NNINSTKNGK…GDNPPPADNG (116 aa)) are disordered. The span at 304–313 (NGDEKNKNNN) shows a compositional bias: basic and acidic residues. Over residues 318 to 365 (NNNNSSEKNNNNNNNNNNNNDDNGNNNNNNSGNDNNNTTNNDSNNKNN) the composition is skewed to low complexity. Polar residues predominate over residues 366–387 (SITTGNDNENIVNNDLPTTVVS).

This sequence belongs to the mediator complex subunit 2 family. In terms of assembly, component of the Mediator complex, which is composed of at least 21 subunits that form three structurally distinct submodules. The Mediator head module contains MED6, MED8, MED11, SRB4/MED17, SRB5/MED18, ROX3/MED19, SRB2/MED20 and SRB6/MED22, the middle module contains MED1, MED4, NUT1/MED5, MED7, CSE2/MED9, NUT2/MED10, SRB7/MED21 and SOH1/MED31, and the tail module contains MED2, PGD1/MED3, RGR1/MED14, GAL11/MED15 and SIN4/MED16. The head and the middle modules interact directly with RNA polymerase II, whereas the elongated tail module interacts with gene-specific regulatory proteins.

The protein localises to the nucleus. Its function is as follows. Component of the Mediator complex, a coactivator involved in the regulated transcription of nearly all RNA polymerase II-dependent genes. Mediator functions as a bridge to convey information from gene-specific regulatory proteins to the basal RNA polymerase II transcription machinery. The Mediator complex, having a compact conformation in its free form, is recruited to promoters by direct interactions with regulatory proteins and serves for the assembly of a functional preinitiation complex with RNA polymerase II and the general transcription factors. The Mediator complex unfolds to an extended conformation and partially surrounds RNA polymerase II, specifically interacting with the unphosphorylated form of the C-terminal domain (CTD) of RNA polymerase II. The Mediator complex dissociates from the RNA polymerase II holoenzyme and stays at the promoter when transcriptional elongation begins. In Saccharomyces cerevisiae (strain ATCC 204508 / S288c) (Baker's yeast), this protein is Mediator of RNA polymerase II transcription subunit 2 (MED2).